Here is a 121-residue protein sequence, read N- to C-terminus: Small ribosomal subunit protein uS13 (121 aa).

Positions Arg92–Lys121 are disordered.

This sequence belongs to the universal ribosomal protein uS13 family. In terms of assembly, part of the 30S ribosomal subunit. Forms a loose heterodimer with protein S19. Forms two bridges to the 50S subunit in the 70S ribosome.

Functionally, located at the top of the head of the 30S subunit, it contacts several helices of the 16S rRNA. In the 70S ribosome it contacts the 23S rRNA (bridge B1a) and protein L5 of the 50S subunit (bridge B1b), connecting the 2 subunits; these bridges are implicated in subunit movement. Contacts the tRNAs in the A and P-sites. The protein is Small ribosomal subunit protein uS13 of Burkholderia thailandensis (strain ATCC 700388 / DSM 13276 / CCUG 48851 / CIP 106301 / E264).